The primary structure comprises 892 residues: Alanine--tRNA ligase (892 aa).

Residues H577, H581, C680, and H684 each coordinate Zn(2+).

This sequence belongs to the class-II aminoacyl-tRNA synthetase family. It depends on Zn(2+) as a cofactor.

The protein localises to the cytoplasm. It catalyses the reaction tRNA(Ala) + L-alanine + ATP = L-alanyl-tRNA(Ala) + AMP + diphosphate. In terms of biological role, catalyzes the attachment of alanine to tRNA(Ala) in a two-step reaction: alanine is first activated by ATP to form Ala-AMP and then transferred to the acceptor end of tRNA(Ala). Also edits incorrectly charged Ser-tRNA(Ala) and Gly-tRNA(Ala) via its editing domain. This Arthrobacter sp. (strain FB24) protein is Alanine--tRNA ligase.